An 875-amino-acid chain; its full sequence is Serine/threonine-protein kinase ATG1 (875 aa).

A Protein kinase domain is found at 22 to 318 (YSIGPEIGKG…FNEFFNDPLI (297 aa)). ATP-binding positions include 28–36 (IGKGSFATV) and Lys-51. Asp-168 acts as the Proton acceptor in catalysis. Residues 367-379 (EKSKQDLPAREVS) are compositionally biased toward basic and acidic residues. Disordered regions lie at residues 367 to 422 (EKSK…QPHN) and 470 to 515 (INPR…DRRI). Residues 380-389 (THASESQTKA) are compositionally biased toward polar residues. The span at 390 to 405 (VDTRPSSRDEEIKEII) shows a compositional bias: basic and acidic residues. Polar residues-rich tracts occupy residues 406–420 (NKNS…SIQP), 473–490 (RRTS…NNMQ), and 497–508 (LRSNSSGSQRRP).

Belongs to the protein kinase superfamily. Ser/Thr protein kinase family. APG1/unc-51/ULK1 subfamily. Homodimer. Forms a ternary complex with ATG13 and ATG17.

Its subcellular location is the cytoplasm. It localises to the preautophagosomal structure membrane. It catalyses the reaction L-seryl-[protein] + ATP = O-phospho-L-seryl-[protein] + ADP + H(+). The enzyme catalyses L-threonyl-[protein] + ATP = O-phospho-L-threonyl-[protein] + ADP + H(+). In terms of biological role, serine/threonine protein kinase involved in the cytoplasm to vacuole transport (Cvt) and found to be essential in autophagy, where it is required for the formation of autophagosomes. Involved in the clearance of protein aggregates which cannot be efficiently cleared by the proteasome. Required for selective autophagic degradation of the nucleus (nucleophagy) as well as for mitophagy which contributes to regulate mitochondrial quantity and quality by eliminating the mitochondria to a basal level to fulfill cellular energy requirements and preventing excess ROS production. Also involved in endoplasmic reticulum-specific autophagic process, in selective removal of ER-associated degradation (ERAD) substrates. Plays a key role in ATG9 and ATG23 cycling through the pre-autophagosomal structure and is necessary to promote ATG18 binding to ATG9 through phosphorylation of ATG9. Catalyzes phosphorylation of ATG4, decreasing the interaction between ATG4 and ATG8 and impairing deconjugation of PE-conjugated forms of ATG8. The sequence is that of Serine/threonine-protein kinase ATG1 from Debaryomyces hansenii (strain ATCC 36239 / CBS 767 / BCRC 21394 / JCM 1990 / NBRC 0083 / IGC 2968) (Yeast).